Consider the following 387-residue polypeptide: MKFVDEAIIRVEAGNGGSGCVSFRREKYVPDGGPDGGDGGDGGSVYLQADENLNTLITFQFERFHIAERGKNGRGRDCTGHGGEDLILKVPVGTRAIDNDTEESLGDLTTHGQKLLVAKGGFHGLGNTRFKSSTNRAPRQKTLGTDGEVRSLKLELLLLADVGLLGMPNAGKSTFIRSVSKAKPKVADYPFTTLVPNLGVVNPRPGQSFVIADIPGLIEGAADGAGLGVQFLKHLERCRVLLHILDVEPIDGSDPVESARAIVGELEKHSPKLAGKPRWLVINKADLMLEEELQERIDHIVKELEWDGDVYTISAYNREGTAELAVKLLDFIASLPPEEEVDADAEVEFKWDNYHQSANESVNEDFDDDFDDDFDEDDYDVEIIYQR.

The Obg domain occupies 1-159 (MKFVDEAIIR…RSLKLELLLL (159 aa)). The region spanning 160 to 333 (ADVGLLGMPN…LAVKLLDFIA (174 aa)) is the OBG-type G domain. GTP is bound by residues 166-173 (GMPNAGKS), 191-195 (FTTLV), 213-216 (DIPG), 283-286 (NKAD), and 314-316 (SAY). The Mg(2+) site is built by serine 173 and threonine 193.

This sequence belongs to the TRAFAC class OBG-HflX-like GTPase superfamily. OBG GTPase family. As to quaternary structure, monomer. Mg(2+) is required as a cofactor.

It localises to the cytoplasm. An essential GTPase which binds GTP, GDP and possibly (p)ppGpp with moderate affinity, with high nucleotide exchange rates and a fairly low GTP hydrolysis rate. Plays a role in control of the cell cycle, stress response, ribosome biogenesis and in those bacteria that undergo differentiation, in morphogenesis control. In Shewanella halifaxensis (strain HAW-EB4), this protein is GTPase Obg.